Reading from the N-terminus, the 755-residue chain is LIM domain and actin-binding protein 1 (755 aa).

At Met1 the chain carries N-acetylmethionine. Ser15 carries the phosphoserine modification. The span at Lys43–Asn56 shows a compositional bias: basic and acidic residues. The interval Lys43 to Phe151 is disordered. A compositionally biased stretch (polar residues) spans Asp88 to Gly97. Ser132 carries the post-translational modification Phosphoserine. Residues Cys164–Gly166 carry the Required for interaction with NPC1L1 motif. Composition is skewed to basic and acidic residues over residues Ser168 to Met177 and Met199 to Gln208. The segment at Ser168–Glu226 is disordered. Phosphoserine is present on residues Ser225, Ser230, and Ser242. The tract at residues Leu241–Lys379 is disordered. A compositionally biased stretch (basic and acidic residues) spans Glu249–Glu258. Position 263 is a phosphoserine (Ser263). A compositionally biased stretch (basic and acidic residues) spans Lys292 to Glu305. Positions Cys342–Ile354 are enriched in polar residues. A phosphoserine mark is found at Ser348, Ser360, Ser367, and Ser372. Residues Ala363–Lys375 are compositionally biased toward polar residues. One can recognise an LIM zinc-binding domain in the interval Glu386–Ser446. Lys437 is modified (N6-succinyllysine). Disordered stretches follow at residues Glu468–Asp493 and Ser505–Thr714. A Phosphoserine modification is found at Ser488. Positions Val491–Ser511 are required for interaction with MYO5B. Basic and acidic residues-rich tracts occupy residues Ser512–Lys526 and Trp555–Ala566. The segment covering Ser599–Leu611 has biased composition (low complexity). A phosphoserine mark is found at Ser600, Ser603, Ser608, and Ser616. 2 stretches are compositionally biased toward basic and acidic residues: residues Arg638 to Ser653 and Glu662 to Glu673. Phosphoserine occurs at positions 697, 722, and 737.

As to quaternary structure, interacts with NPC1L1; bridges NPC1L1 with MYO5B. Interacts with MYO5B; bridges MYO5B with NPC1L1. Interacts with PXN; this complex stabilizes actin dynamics. Interacts with F-actin and G-actin. Interacts with LUZP1 (via C-terminus); both proteins restrict ciliation and may work together to regulate this process. Binds RAB40B (GTP-bound); interaction influences LIMA1 subcellular localization in lamellipodia during cell migration. In terms of processing, phosphorylation of the C-terminal region by MAPK1/MAPK3 reduces its association with F-actin and contributes to actin filament reorganization and enhanced cell motility. Post-translationally, ubiquitinated by the ECS(RAB40B) complex leading to its degradation. In terms of tissue distribution, expressed throughout the kidney, including renal cortex, medulla, and glomeruli. Expressed in glomeruli, tubular epithelial cells, and extraglomerular vascular endothelial cells (at protein level).

The protein localises to the cytoplasm. It is found in the cell junction. Its subcellular location is the focal adhesion. It localises to the cytoskeleton. The protein resides in the stress fiber. The protein localises to the cell membrane. It is found in the cell projection. Its subcellular location is the ruffle. It localises to the lamellipodium. Actin-binding protein involved in actin cytoskeleton regulation and dynamics. Increases the number and size of actin stress fibers and inhibits membrane ruffling. Inhibits actin filament depolymerization. Bundles actin filaments, delays filament nucleation and reduces formation of branched filaments. Acts as a negative regulator of primary cilium formation. Plays a role in cholesterol homeostasis. Influences plasma cholesterol levels through regulation of intestinal cholesterol absorption. May act as a scaffold protein by regulating NPC1L1 transportation, an essential protein for cholesterol absorption, to the plasma membrane by recruiting MYO5B to NPC1L1, and thus facilitates cholesterol uptake. The chain is LIM domain and actin-binding protein 1 from Rattus norvegicus (Rat).